The chain runs to 118 residues: MAAEGEVIACHTVEDWTEKLKAANESKKLIVIDFTATWCPPCRFIAPVFADLAKKHLDVVFFKVDVDELNTVAEEFKVQAMPTFIFMKEGEIKETVVGAAKEEIIANLEKHKTVVAAA.

At A2 the chain carries N-acetylalanine. Residues 2 to 113 (AAEGEVIACH…IIANLEKHKT (112 aa)) enclose the Thioredoxin domain. Active-site nucleophile residues include C39 and C42. The cysteines at positions 39 and 42 are disulfide-linked.

It belongs to the thioredoxin family. Plant H-type subfamily. As to quaternary structure, interacts with FBA5 and FBA8. Interacts with FBA6. Interacts with MDH1.

It is found in the cytoplasm. In terms of biological role, thiol-disulfide oxidoreductase that possesses disulfide reductase and insulin disulfide bonds reducing activities. Heat shock causes oligomerization and formation of high molecular weight (HMW) complexes with concomitant functional switching from a disulfide reductase to chaperone. The chain is Thioredoxin H3 (TRX3) from Arabidopsis thaliana (Mouse-ear cress).